A 367-amino-acid polypeptide reads, in one-letter code: Chorismate synthase (367 aa).

Residues 39-60 (EEFSHDLQRRASGKSRHTSARR) form a disordered region. Positions 48 and 54 each coordinate NADP(+). Residues 125–127 (RSS), 238–239 (NA), Gly-278, 293–297 (KPTSS), and Arg-319 each bind FMN.

The protein belongs to the chorismate synthase family. Homotetramer. FMNH2 serves as cofactor.

It carries out the reaction 5-O-(1-carboxyvinyl)-3-phosphoshikimate = chorismate + phosphate. It functions in the pathway metabolic intermediate biosynthesis; chorismate biosynthesis; chorismate from D-erythrose 4-phosphate and phosphoenolpyruvate: step 7/7. Catalyzes the anti-1,4-elimination of the C-3 phosphate and the C-6 proR hydrogen from 5-enolpyruvylshikimate-3-phosphate (EPSP) to yield chorismate, which is the branch point compound that serves as the starting substrate for the three terminal pathways of aromatic amino acid biosynthesis. This reaction introduces a second double bond into the aromatic ring system. This is Chorismate synthase from Xanthomonas oryzae pv. oryzae (strain MAFF 311018).